The chain runs to 143 residues: MTKTFSAKPADVTHEWFVIDATDKVLGRVASEVALRLRGKHKAIYTPHVDTGDFIVIINAAQLRVTGAKPIDKVYYRHSGYPGGITATNFRDMQAKHPGRALEKAVKGMLPKGPLGYAMIKKLKVYGGAEHPHTAQQPKVLEL.

This sequence belongs to the universal ribosomal protein uL13 family. As to quaternary structure, part of the 50S ribosomal subunit.

Its function is as follows. This protein is one of the early assembly proteins of the 50S ribosomal subunit, although it is not seen to bind rRNA by itself. It is important during the early stages of 50S assembly. The polypeptide is Large ribosomal subunit protein uL13 (Variovorax paradoxus (strain S110)).